The primary structure comprises 256 residues: Thiazole synthase (256 aa).

Catalysis depends on lysine 98, which acts as the Schiff-base intermediate with DXP. 1-deoxy-D-xylulose 5-phosphate-binding positions include glycine 159, 185-186 (AG), and 207-208 (NT).

It belongs to the ThiG family. As to quaternary structure, homotetramer. Forms heterodimers with either ThiH or ThiS.

The protein resides in the cytoplasm. The catalysed reaction is [ThiS sulfur-carrier protein]-C-terminal-Gly-aminoethanethioate + 2-iminoacetate + 1-deoxy-D-xylulose 5-phosphate = [ThiS sulfur-carrier protein]-C-terminal Gly-Gly + 2-[(2R,5Z)-2-carboxy-4-methylthiazol-5(2H)-ylidene]ethyl phosphate + 2 H2O + H(+). It functions in the pathway cofactor biosynthesis; thiamine diphosphate biosynthesis. Catalyzes the rearrangement of 1-deoxy-D-xylulose 5-phosphate (DXP) to produce the thiazole phosphate moiety of thiamine. Sulfur is provided by the thiocarboxylate moiety of the carrier protein ThiS. In vitro, sulfur can be provided by H(2)S. This is Thiazole synthase from Aliivibrio fischeri (strain MJ11) (Vibrio fischeri).